Here is a 316-residue protein sequence, read N- to C-terminus: Acetyl-coenzyme A carboxylase carboxyl transferase subunit alpha (316 aa).

Positions 40 to 293 (LERRSKDALR…GETIENGFRE (254 aa)) constitute a CoA carboxyltransferase C-terminal domain.

The protein belongs to the AccA family. As to quaternary structure, acetyl-CoA carboxylase is a heterohexamer composed of biotin carboxyl carrier protein (AccB), biotin carboxylase (AccC) and two subunits each of ACCase subunit alpha (AccA) and ACCase subunit beta (AccD).

It is found in the cytoplasm. The catalysed reaction is N(6)-carboxybiotinyl-L-lysyl-[protein] + acetyl-CoA = N(6)-biotinyl-L-lysyl-[protein] + malonyl-CoA. It functions in the pathway lipid metabolism; malonyl-CoA biosynthesis; malonyl-CoA from acetyl-CoA: step 1/1. Component of the acetyl coenzyme A carboxylase (ACC) complex. First, biotin carboxylase catalyzes the carboxylation of biotin on its carrier protein (BCCP) and then the CO(2) group is transferred by the carboxyltransferase to acetyl-CoA to form malonyl-CoA. The sequence is that of Acetyl-coenzyme A carboxylase carboxyl transferase subunit alpha from Chelativorans sp. (strain BNC1).